Here is a 123-residue protein sequence, read N- to C-terminus: Ig heavy chain V region HPCG14 (123 aa).

In terms of domain architecture, Ig-like spans 1–114 (EVKLVESGGG…GYDYWFDVWG (114 aa)).

This chain is Ig heavy chain V region HPCG14, found in Mus musculus (Mouse).